The chain runs to 156 residues: Aspartate 1-decarboxylase (156 aa).

Residue Ser-26 is the Schiff-base intermediate with substrate; via pyruvic acid of the active site. Ser-26 carries the post-translational modification Pyruvic acid (Ser). Thr-58 contributes to the substrate binding site. The active-site Proton donor is Tyr-59. 74–76 contributes to the substrate binding site; sequence GGA.

Belongs to the PanD family. As to quaternary structure, heterooctamer of four alpha and four beta subunits. Pyruvate is required as a cofactor. In terms of processing, is synthesized initially as an inactive proenzyme, which is activated by self-cleavage at a specific serine bond to produce a beta-subunit with a hydroxyl group at its C-terminus and an alpha-subunit with a pyruvoyl group at its N-terminus.

The protein localises to the cytoplasm. It catalyses the reaction L-aspartate + H(+) = beta-alanine + CO2. The protein operates within cofactor biosynthesis; (R)-pantothenate biosynthesis; beta-alanine from L-aspartate: step 1/1. Its function is as follows. Catalyzes the pyruvoyl-dependent decarboxylation of aspartate to produce beta-alanine. This Gloeothece citriformis (strain PCC 7424) (Cyanothece sp. (strain PCC 7424)) protein is Aspartate 1-decarboxylase.